We begin with the raw amino-acid sequence, 447 residues long: Phosphatidylinositol 4-kinase type 2-alpha (447 aa).

The interval 1-77 is disordered; sequence MDETSPLVSP…HRNEFPEDPE (77 aa). Residues 48-77 are compositionally biased toward basic and acidic residues; the sequence is RSRERQPLLDRDRGASPRDPHRNEFPEDPE. The region spanning 92-421 is the PI3K/PI4K catalytic domain; the sequence is GIYPERIYQG…VQMPPVIVET (330 aa). Residues 98–104 are G-loop; sequence IYQGSSG. ATP contacts are provided by residues 99-105 and Lys-120; that span reads YQGSSGS. An important for substrate binding region spans residues 125 to 127; that stretch reads EPY. The tract at residues 133 to 146 is important for interaction with membranes; sequence KWTKWLQKLCCPCC. Residues Cys-142, Cys-143, Cys-145, and Cys-146 are each lipidated (S-palmitoyl cysteine). ATP is bound at residue 229–232; the sequence is QIFV. The segment at 236–244 is important for interaction with membranes; the sequence is KDADFWLRR. Residues 273 to 281 form a catalytic loop region; it reads RNTDRGNDN. The interval 312–332 is activation loop; that stretch reads AIDNGLAFPLKHPDSWRAYPF. Asp-314 contributes to the ATP binding site. Residues 327–336 form an important for interaction with membranes region; sequence WRAYPFYWAW.

Belongs to the PI3/PI4-kinase family. Type II PI4K subfamily.

The protein localises to the golgi apparatus. Its subcellular location is the trans-Golgi network membrane. The protein resides in the membrane raft. It is found in the endosome. It localises to the cytoplasmic vesicle. The protein localises to the cell projection. Its subcellular location is the dendrite. The protein resides in the presynaptic cell membrane. It is found in the synapse. It localises to the synaptosome. The protein localises to the mitochondrion. Its subcellular location is the membrane. The protein resides in the cell membrane. It is found in the perikaryon. It localises to the neuron projection. The catalysed reaction is a 1,2-diacyl-sn-glycero-3-phospho-(1D-myo-inositol) + ATP = a 1,2-diacyl-sn-glycero-3-phospho-(1D-myo-inositol 4-phosphate) + ADP + H(+). Its function is as follows. Membrane-bound phosphatidylinositol-4 kinase (PI4-kinase) that catalyzes the phosphorylation of phosphatidylinositol (PI) to phosphatidylinositol 4-phosphate (PI4P), a lipid that plays important roles in endocytosis, Golgi function, protein sorting and membrane trafficking. Besides, phosphorylation of phosphatidylinositol (PI) to phosphatidylinositol 4-phosphate (PI4P) is the first committed step in the generation of phosphatidylinositol 4,5-bisphosphate (PIP2), a precursor of the second messenger inositol 1,4,5-trisphosphate (InsP3). The protein is Phosphatidylinositol 4-kinase type 2-alpha (pi4k2a) of Danio rerio (Zebrafish).